Reading from the N-terminus, the 90-residue chain is Early nodulin-36A (90 aa).

This chain is Early nodulin-36A, found in Glycine max (Soybean).